Consider the following 933-residue polypeptide: DNA repair-scaffolding protein (933 aa).

Disordered stretches follow at residues 1–34 (MSGA…LRRG), 67–174 (SEKT…KGTL), and 205–224 (YSSD…IDSE). 3 stretches are compositionally biased toward basic and acidic residues: residues 16–29 (WHIE…ERSQ), 71–87 (GITE…KTET), and 119–132 (RDGR…RLGD). The segment covering 138–148 (PEDEDIEDELQ) has biased composition (acidic residues). Positions 175 to 469 (DISDCDSCAS…GTGWTHGHEK (295 aa)) are necessary for interaction with RAD51. Residues 214–224 (DPEHSLFIDSE) show a composition bias toward basic and acidic residues.

As to quaternary structure, found in a complex, at least composed of BLM, RAD51 and SPIDR; the complex formation is mediated by SPIDR. Interacts (via C-terminal region) with BLM; the interaction is direct. Interacts with RAD51; the interaction is direct. Interacts (via the C-terminal region) with FIGNL1 (via N-terminal one-half region); the interaction is direct.

The protein resides in the nucleus. Its function is as follows. Plays a role in DNA double-strand break (DBS) repair via homologous recombination (HR). Serves as a scaffolding protein that helps to promote the recruitment of DNA-processing enzymes like the helicase BLM and recombinase RAD51 to site of DNA damage, and hence contributes to maintain genomic integrity. The protein is DNA repair-scaffolding protein (Spidr) of Mus musculus (Mouse).